We begin with the raw amino-acid sequence, 499 residues long: Dipeptide and tripeptide permease A (499 aa).

Over 1-34 (MSTANKKPAESVSMNAFKQPRSFYLIFSIELWER) the chain is Cytoplasmic. The chain crosses the membrane as a helical span at residues 35–55 (FGFYGLQGIMAVYLVKQLGMS). The Periplasmic portion of the chain corresponds to 56–59 (EADS). Residues 60 to 80 (ITLFSSFSALVYGLVAIGGWL) traverse the membrane as a helical segment. The Cytoplasmic segment spans residues 81 to 89 (GDKVLGTKR). A helical transmembrane segment spans residues 90 to 110 (VIMLGTIVLAIGYALVAWSGH). Position 111 (D111) is a topological domain, periplasmic. The helical transmembrane segment at 112-132 (AAIVYFGMATIAVGNGLFKAN) threads the bilayer. Topologically, residues 133–153 (PSALLSTCYEKDDPRLDGAFT) are cytoplasmic. The chain crosses the membrane as a helical span at residues 154–174 (MYYMAINIGSFFSMLATPWLA). The Periplasmic portion of the chain corresponds to 175 to 178 (EKFG). Residues 179–199 (WSVAFSLSFVGMLITLVNFIF) form a helical membrane-spanning segment. The Cytoplasmic portion of the chain corresponds to 200-217 (CKKWVKDYGSKPDFAPLH). The helical transmembrane segment at 218–238 (VGKLLATIVGIVVLVAIATWL) threads the bilayer. The Periplasmic segment spans residues 239 to 246 (LHNQGIAR). A helical membrane pass occupies residues 247 to 267 (LVLGVVALGIVIIFAKEAFAM). The Cytoplasmic segment spans residues 268-274 (QGAARRK). Residues 275 to 295 (MIVAFILMLEAIVFFVLYQQM) form a helical membrane-spanning segment. Residues 296 to 320 (PTSLNFFAIRNVEHSILGIAFQPEQ) lie on the Periplasmic side of the membrane. Residues 321 to 341 (FQALNPFWIMIGSPILAAIYN) form a helical membrane-spanning segment. Residues 342-350 (KMGDRLPMP) lie on the Cytoplasmic side of the membrane. The helical transmembrane segment at 351–371 (FKFTIGMLLCSGAFLVLPLGA) threads the bilayer. The Periplasmic segment spans residues 372-383 (KFASEAGIVSVN). A helical transmembrane segment spans residues 384-404 (WLILSYALQSIGELMISGLGL). At 405 to 414 (AMVAQLVPQR) the chain is on the cytoplasmic side. The chain crosses the membrane as a helical span at residues 415 to 435 (LMGFIMGSWFLTTAGAAMIAG). Topologically, residues 436–459 (KVANLMAVPENVSDPLQSLEVYGR) are periplasmic. A helical transmembrane segment spans residues 460 to 480 (VFMQIGIATGVIAVLMLLTAP). The Cytoplasmic segment spans residues 481–499 (LLNRMTQEDKPKETDTAHA).

This sequence belongs to the major facilitator superfamily. Proton-dependent oligopeptide transporter (POT/PTR) (TC 2.A.17) family. DtpA subfamily.

Its subcellular location is the cell inner membrane. Proton-dependent permease that transports di- and tripeptides. This is Dipeptide and tripeptide permease A from Cronobacter turicensis (strain DSM 18703 / CCUG 55852 / LMG 23827 / z3032).